The sequence spans 474 residues: tRNA (guanine(37)-N(1))-methyltransferase (474 aa).

S-adenosyl-L-methionine contacts are provided by residues His-234, 274-275 (DL), 303-304 (DA), and Asn-345. Residues 452-464 (EPEAQCESEEAEE) are compositionally biased toward acidic residues. The disordered stretch occupies residues 452-474 (EPEAQCESEEAEEPSSKRIKVDT). Residues 465 to 474 (PSSKRIKVDT) show a composition bias toward basic and acidic residues.

This sequence belongs to the class I-like SAM-binding methyltransferase superfamily. TRM5/TYW2 family. As to quaternary structure, monomer.

It is found in the mitochondrion matrix. The protein resides in the nucleus. Its subcellular location is the cytoplasm. The catalysed reaction is guanosine(37) in tRNA + S-adenosyl-L-methionine = N(1)-methylguanosine(37) in tRNA + S-adenosyl-L-homocysteine + H(+). Its function is as follows. Specifically methylates the N1 position of guanosine-37 in various cytoplasmic and mitochondrial tRNAs. Methylation is not dependent on the nature of the nucleoside 5' of the target nucleoside. This is the first step in the biosynthesis of wybutosine (yW), a modified base adjacent to the anticodon of tRNAs and required for accurate decoding. This chain is tRNA (guanine(37)-N(1))-methyltransferase, found in Caenorhabditis elegans.